The primary structure comprises 172 residues: Molybdopterin synthase catalytic subunit (172 aa).

Ser-20 bears the Phosphoserine mark. Residues 127-128, Lys-143, and 150-152 contribute to the substrate site; these read HR and KKE.

The protein belongs to the MoaE family. MOCS2B subfamily. Heterotetramer; composed of 2 small (MOCS2A) and 2 large (MOCS2B) subunits.

Its subcellular location is the cytoplasm. The protein localises to the cytosol. The catalysed reaction is 2 [molybdopterin-synthase sulfur-carrier protein]-C-terminal-Gly-aminoethanethioate + cyclic pyranopterin phosphate + H2O = molybdopterin + 2 [molybdopterin-synthase sulfur-carrier protein]-C-terminal Gly-Gly + 2 H(+). It participates in cofactor biosynthesis; molybdopterin biosynthesis. Functionally, catalytic subunit of the molybdopterin synthase complex, a complex that catalyzes the conversion of precursor Z into molybdopterin. Acts by mediating the incorporation of 2 sulfur atoms from thiocarboxylated MOCS2A into precursor Z to generate a dithiolene group. The sequence is that of Molybdopterin synthase catalytic subunit from Pongo abelii (Sumatran orangutan).